The primary structure comprises 329 residues: AUGMIN subunit 7 (329 aa).

The stretch at 169 to 197 forms a coiled coil; it reads DVSELETKLSEQAKILSNLQQKVDDLAAK.

As to quaternary structure, part of the augmin complex composed of 8 subunits. The complex acts on microtubules and interacts with gamma-tubulin in spindles and the phragmoplast.

It is found in the cytoplasm. The protein resides in the cytoskeleton. The protein localises to the spindle. Its subcellular location is the phragmoplast. Its function is as follows. Contributes to the assembly of the acentrosomal spindle and phragmoplast microtubule arrays as part of the augmin complex. Regulates the association of gamma-tubulin with the spindle and phragmoplast microtubules. This Arabidopsis thaliana (Mouse-ear cress) protein is AUGMIN subunit 7.